The sequence spans 310 residues: 4-hydroxythreonine-4-phosphate dehydrogenase (310 aa).

T129 is a substrate binding site. H158, H202, and H250 together coordinate a divalent metal cation. Positions 258, 267, and 276 each coordinate substrate.

The protein belongs to the PdxA family. Homodimer. Requires a divalent metal cation as cofactor.

It is found in the cytoplasm. It carries out the reaction 4-(phosphooxy)-L-threonine + NAD(+) = 3-amino-2-oxopropyl phosphate + CO2 + NADH. Its pathway is cofactor biosynthesis; pyridoxine 5'-phosphate biosynthesis; pyridoxine 5'-phosphate from D-erythrose 4-phosphate: step 4/5. In terms of biological role, catalyzes the NAD(P)-dependent oxidation of 4-(phosphooxy)-L-threonine (HTP) into 2-amino-3-oxo-4-(phosphooxy)butyric acid which spontaneously decarboxylates to form 3-amino-2-oxopropyl phosphate (AHAP). This is 4-hydroxythreonine-4-phosphate dehydrogenase from Hydrogenobaculum sp. (strain Y04AAS1).